The chain runs to 598 residues: ATP-dependent lipid A-core flippase (598 aa).

Positions 1–15 are enriched in polar residues; sequence MSQAYQPDSTKTSAK. The interval 1–21 is disordered; sequence MSQAYQPDSTKTSAKTPVAPT. The next 4 helical transmembrane spans lie at 44 to 64, 85 to 105, 172 to 192, and 269 to 289; these read WWAI…EIWI, LFPF…FLGN, VVAL…ILFV, and INTP…VWLA. The ABC transmembrane type-1 domain occupies 48–329; that stretch reads LLTIIGFAIN…LTDVNQQLQR (282 aa). The region spanning 360 to 595 is the ABC transporter domain; that stretch reads IKLDNVSLVY…HGHYAQMYAR (236 aa). 393-400 lines the ATP pocket; that stretch reads GRSGAGKS.

It belongs to the ABC transporter superfamily. Lipid exporter (TC 3.A.1.106) family. Homodimer.

The protein resides in the cell inner membrane. It catalyses the reaction ATP + H2O + lipid A-core oligosaccharideSide 1 = ADP + phosphate + lipid A-core oligosaccharideSide 2.. In terms of biological role, involved in lipopolysaccharide (LPS) biosynthesis. Translocates lipid A-core from the inner to the outer leaflet of the inner membrane. Transmembrane domains (TMD) form a pore in the inner membrane and the ATP-binding domain (NBD) is responsible for energy generation. In Psychrobacter cryohalolentis (strain ATCC BAA-1226 / DSM 17306 / VKM B-2378 / K5), this protein is ATP-dependent lipid A-core flippase.